We begin with the raw amino-acid sequence, 351 residues long: Anthranilate phosphoribosyltransferase (351 aa).

Residues Gly-84, 87–88, 95–98, 113–121, and Ala-125 contribute to the 5-phospho-alpha-D-ribose 1-diphosphate site; these read GD, NISS, and KHGNRGASS. Gly-84 is an anthranilate binding site. Ser-97 contacts Mg(2+). Asn-116 contacts anthranilate. Arg-171 serves as a coordination point for anthranilate. Mg(2+)-binding residues include Asp-229 and Lys-230.

This sequence belongs to the anthranilate phosphoribosyltransferase family. In terms of assembly, homodimer. The cofactor is Mg(2+).

The catalysed reaction is N-(5-phospho-beta-D-ribosyl)anthranilate + diphosphate = 5-phospho-alpha-D-ribose 1-diphosphate + anthranilate. Its pathway is amino-acid biosynthesis; L-tryptophan biosynthesis; L-tryptophan from chorismate: step 2/5. In terms of biological role, catalyzes the transfer of the phosphoribosyl group of 5-phosphorylribose-1-pyrophosphate (PRPP) to anthranilate to yield N-(5'-phosphoribosyl)-anthranilate (PRA). This chain is Anthranilate phosphoribosyltransferase, found in Clavibacter michiganensis subsp. michiganensis (strain NCPPB 382).